Here is a 217-residue protein sequence, read N- to C-terminus: Orotidine 5'-phosphate decarboxylase (217 aa).

Substrate is bound by residues aspartate 14, lysine 36, 64-73 (DFKVADIPST), serine 120, 172-182 (PGVGAQGGNLS), glycine 197, and arginine 198. Lysine 66 acts as the Proton donor in catalysis.

It belongs to the OMP decarboxylase family. Type 1 subfamily. In terms of assembly, homodimer.

It catalyses the reaction orotidine 5'-phosphate + H(+) = UMP + CO2. It functions in the pathway pyrimidine metabolism; UMP biosynthesis via de novo pathway; UMP from orotate: step 2/2. Functionally, catalyzes the decarboxylation of orotidine 5'-monophosphate (OMP) to uridine 5'-monophosphate (UMP). This is Orotidine 5'-phosphate decarboxylase from Methanococcus maripaludis (strain DSM 14266 / JCM 13030 / NBRC 101832 / S2 / LL).